Reading from the N-terminus, the 234-residue chain is Thiamine-phosphate synthase (234 aa).

Residues 65-69 (QYRNK) and asparagine 97 contribute to the 4-amino-2-methyl-5-(diphosphooxymethyl)pyrimidine site. Residues aspartate 98 and aspartate 117 each coordinate Mg(2+). 4-amino-2-methyl-5-(diphosphooxymethyl)pyrimidine is bound at residue serine 136. A 2-[(2R,5Z)-2-carboxy-4-methylthiazol-5(2H)-ylidene]ethyl phosphate-binding site is contributed by 163–165 (SHT). Lysine 166 provides a ligand contact to 4-amino-2-methyl-5-(diphosphooxymethyl)pyrimidine. Residues glycine 192 and 212-213 (IS) each bind 2-[(2R,5Z)-2-carboxy-4-methylthiazol-5(2H)-ylidene]ethyl phosphate.

The protein belongs to the thiamine-phosphate synthase family. The cofactor is Mg(2+).

The catalysed reaction is 2-[(2R,5Z)-2-carboxy-4-methylthiazol-5(2H)-ylidene]ethyl phosphate + 4-amino-2-methyl-5-(diphosphooxymethyl)pyrimidine + 2 H(+) = thiamine phosphate + CO2 + diphosphate. The enzyme catalyses 2-(2-carboxy-4-methylthiazol-5-yl)ethyl phosphate + 4-amino-2-methyl-5-(diphosphooxymethyl)pyrimidine + 2 H(+) = thiamine phosphate + CO2 + diphosphate. It catalyses the reaction 4-methyl-5-(2-phosphooxyethyl)-thiazole + 4-amino-2-methyl-5-(diphosphooxymethyl)pyrimidine + H(+) = thiamine phosphate + diphosphate. The protein operates within cofactor biosynthesis; thiamine diphosphate biosynthesis; thiamine phosphate from 4-amino-2-methyl-5-diphosphomethylpyrimidine and 4-methyl-5-(2-phosphoethyl)-thiazole: step 1/1. Its function is as follows. Condenses 4-methyl-5-(beta-hydroxyethyl)thiazole monophosphate (THZ-P) and 2-methyl-4-amino-5-hydroxymethyl pyrimidine pyrophosphate (HMP-PP) to form thiamine monophosphate (TMP). The polypeptide is Thiamine-phosphate synthase (Xylella fastidiosa (strain 9a5c)).